Consider the following 1170-residue polypeptide: Cellulose synthase-like protein D2 (1170 aa).

Disordered stretches follow at residues 1 to 48 (MASS…RRTH), 54 to 73 (SYSR…MSPE), and 269 to 295 (NEVD…EFTS). Residues 10 to 24 (RHSNSSRLSRMSYSG) show a composition bias toward low complexity. Residues 273–288 (NGGGGGGGGGLGGGDG) are compositionally biased toward gly residues. Transmembrane regions (helical) follow at residues 311–331 (VLSP…LFLA) and 341–361 (AMWL…SWLL). The active site involves Asp-441. Residues 527–551 (HAREEIKAMKRQREAALDDVVEAVK) adopt a coiled-coil conformation. Residue Asp-873 is part of the active site. Transmembrane regions (helical) follow at residues 955-975 (IFLI…QFIV), 981-1001 (TFLT…VLEI), 1027-1047 (LAAV…SFTL), 1070-1090 (SLMI…AVGF), 1104-1124 (LLGG…FAKG), and 1134-1154 (TIVF…WVAI).

It belongs to the glycosyltransferase 2 family. Plant cellulose synthase-like D subfamily.

It localises to the golgi apparatus membrane. In terms of biological role, thought to be a Golgi-localized beta-glycan synthase that polymerize the backbones of noncellulosic polysaccharides (hemicelluloses) of plant cell wall. In Oryza sativa subsp. japonica (Rice), this protein is Cellulose synthase-like protein D2 (CSLD2).